A 232-amino-acid polypeptide reads, in one-letter code: Ribose-5-phosphate isomerase A (232 aa).

Substrate-binding positions include 31-34 (TGST), 88-91 (DGAD), and 101-104 (KGGG). Glu-110 acts as the Proton acceptor in catalysis. Lys-128 is a binding site for substrate.

This sequence belongs to the ribose 5-phosphate isomerase family. In terms of assembly, homodimer.

The enzyme catalyses aldehydo-D-ribose 5-phosphate = D-ribulose 5-phosphate. It participates in carbohydrate degradation; pentose phosphate pathway; D-ribose 5-phosphate from D-ribulose 5-phosphate (non-oxidative stage): step 1/1. Its function is as follows. Catalyzes the reversible conversion of ribose-5-phosphate to ribulose 5-phosphate. This chain is Ribose-5-phosphate isomerase A, found in Lactobacillus gasseri (strain ATCC 33323 / DSM 20243 / BCRC 14619 / CIP 102991 / JCM 1131 / KCTC 3163 / NCIMB 11718 / NCTC 13722 / AM63).